The chain runs to 259 residues: Chymotrypsin-1 (259 aa).

The first 17 residues, Met1–Ala17, serve as a signal peptide directing secretion. The propeptide at Ala18–Arg32 is activation peptide. Positions Val33–Ala255 constitute a Peptidase S1 domain. Residues Cys59 and Cys75 are joined by a disulfide bond. Residues His74 and Asp119 each act as charge relay system in the active site. 2 disulfide bridges follow: Cys182–Cys198 and Cys208–Cys232. Ser212 (charge relay system) is an active-site residue.

This sequence belongs to the peptidase S1 family. As to expression, after blood feeding, expression is induced in the midgut epithelium, followed by secretion into the midgut lumen.

It is found in the secreted. The enzyme catalyses Preferential cleavage: Tyr-|-Xaa, Trp-|-Xaa, Phe-|-Xaa, Leu-|-Xaa.. The sequence is that of Chymotrypsin-1 (CHYM1) from Anopheles gambiae (African malaria mosquito).